The sequence spans 470 residues: Glutamyl-tRNA(Gln) amidotransferase subunit A (470 aa).

Active-site charge relay system residues include K71 and S146. Residue S170 is the Acyl-ester intermediate of the active site.

Belongs to the amidase family. GatA subfamily. As to quaternary structure, heterotrimer of A, B and C subunits.

It catalyses the reaction L-glutamyl-tRNA(Gln) + L-glutamine + ATP + H2O = L-glutaminyl-tRNA(Gln) + L-glutamate + ADP + phosphate + H(+). In terms of biological role, allows the formation of correctly charged Gln-tRNA(Gln) through the transamidation of misacylated Glu-tRNA(Gln) in organisms which lack glutaminyl-tRNA synthetase. The reaction takes place in the presence of glutamine and ATP through an activated gamma-phospho-Glu-tRNA(Gln). The polypeptide is Glutamyl-tRNA(Gln) amidotransferase subunit A (Akkermansia muciniphila (strain ATCC BAA-835 / DSM 22959 / JCM 33894 / BCRC 81048 / CCUG 64013 / CIP 107961 / Muc)).